The chain runs to 313 residues: MLKMESTQQMASSIINTSFEAAVVAATSTLELMGIQYDYNEVYTRVKSKFEYVMDDSGVKNNLLGKAATIDQALNGKFGSAARNRNWMADTRTTARLDEDVNKLRMMLSSKGIDQKMRVLNACFSVKRAPGKSSSIIKCTRLMRDKIERGEVEVDDSFVEEKMEVDTIDWKSRYEQLEKRFESLKQRVNEKYTSWVQKAKKVNENMYSLQNVISQQQSQIADLQNYCNKLEVDLQNKISSLVSSVEWYLKSMELPDEIKTDIEQQLNSIDVINPINAIDDFESLIRNIILDYDRIFLMFKGLMRQCNYEYTYE.

Residues 1-149 are RNA-binding; that stretch reads MLKMESTQQM…TRLMRDKIER (149 aa). Positions 150–206 are dimerization; the sequence is GEVEVDDSFVEEKMEVDTIDWKSRYEQLEKRFESLKQRVNEKYTSWVQKAKKVNENM. Positions 166-237 form a coiled coil; the sequence is DTIDWKSRYE…NKLEVDLQNK (72 aa). The interval 170 to 234 is interaction with host ZC3H7B; it reads WKSRYEQLEK…NYCNKLEVDL (65 aa). An interaction with host EIF4G1 region spans residues 208–313; the sequence is SLQNVISQQQ…RQCNYEYTYE (106 aa).

The protein belongs to the rotavirus NSP3 family. In terms of assembly, homodimer. Interacts (via the coiled-coil region) with host ZC3H7B (via LD motif). Interacts with host EIF4G1.

Its subcellular location is the host cytoplasm. Its function is as follows. Plays an important role in stimulating the translation of viral mRNAs. These mRNAs are capped but not polyadenylated, instead terminating in a conserved sequence 'GACC' at the 3' that is recognized by NSP3, which competes with host PABPC1 for EIF4G1 binding. The interaction between NSP3 and host EIF4G1 stabilizes the EIF4E-EIF4G1 interaction, thereby facilitating the initiation of capped mRNA translation. The polypeptide is Non-structural protein 3 (Rotavirus A (strain RVA/Cow/United States/WC3/1981/G6P7[5]) (RV-A)).